The sequence spans 464 residues: tRNA-2-methylthio-N(6)-dimethylallyladenosine synthase (464 aa).

The 117-residue stretch at 19 to 135 folds into the MTTase N-terminal domain; it reads GSYWITTFGC…LENLLERVDL (117 aa). 6 residues coordinate [4Fe-4S] cluster: Cys-28, Cys-64, Cys-98, Cys-170, Cys-174, and Cys-177. One can recognise a Radical SAM core domain in the interval 156-393; it reads RDSSICGWVN…NELVETTSRK (238 aa). Residues 396 to 464 form the TRAM domain; sequence QRYLNNIESV…SFSLSGQIYK (69 aa).

Belongs to the methylthiotransferase family. MiaB subfamily. As to quaternary structure, monomer. [4Fe-4S] cluster serves as cofactor.

It localises to the cytoplasm. It catalyses the reaction N(6)-dimethylallyladenosine(37) in tRNA + (sulfur carrier)-SH + AH2 + 2 S-adenosyl-L-methionine = 2-methylsulfanyl-N(6)-dimethylallyladenosine(37) in tRNA + (sulfur carrier)-H + 5'-deoxyadenosine + L-methionine + A + S-adenosyl-L-homocysteine + 2 H(+). In terms of biological role, catalyzes the methylthiolation of N6-(dimethylallyl)adenosine (i(6)A), leading to the formation of 2-methylthio-N6-(dimethylallyl)adenosine (ms(2)i(6)A) at position 37 in tRNAs that read codons beginning with uridine. The protein is tRNA-2-methylthio-N(6)-dimethylallyladenosine synthase of Prochlorococcus marinus subsp. pastoris (strain CCMP1986 / NIES-2087 / MED4).